Here is a 250-residue protein sequence, read N- to C-terminus: Oil body-associated protein 2B (250 aa).

The disordered stretch occupies residues 1-29; the sequence is MSSSDQNPAATPASSGPAEPSPPGRPTAV. Low complexity predominate over residues 8-18; that stretch reads PAATPASSGPA.

It belongs to the OBAP family.

The polypeptide is Oil body-associated protein 2B (Zea mays (Maize)).